A 91-amino-acid polypeptide reads, in one-letter code: Bacterial microcompartment shell protein PduJ (91 aa).

Positions 4 to 88 constitute a BMC domain; sequence ALGLVETKGL…PHSDVEAILP (85 aa).

Belongs to the bacterial microcompartments protein family. Homohexamer with a central pore. Interacts with PduP, which targets PduP to the BMC. Interacts with shell protein PduA.

The protein resides in the bacterial microcompartment. Its pathway is polyol metabolism; 1,2-propanediol degradation. In terms of biological role, one of the major shell proteins of the bacterial microcompartment (BMC) dedicated to 1,2-propanediol (1,2-PD) degradation. At least one of PduA or PduJ is required for BMC assembly; it must be encoded as the first gene in the pdu operon. Required for structural integrity of BMCs and to mitigate propionaldehyde toxicity, probably joins facets responsible for BMC closure. Probably the hub for binding multiple enzymes to the interior of the BMC. Functionally, expression of a cosmid containing the full 21-gene pdu operon in E.coli allows E.coli to grow on 1,2-PD with the appearance of BMCs in its cytoplasm. Overexpression of this protein leads to an internal structure with a whorled architecture. The 1,2-PD-specific bacterial microcompartment (BMC) concentrates low levels of 1,2-PD catabolic enzymes, concentrates volatile reaction intermediates thus enhancing pathway flux and keeps the level of toxic, mutagenic propionaldehyde low. The protein is Bacterial microcompartment shell protein PduJ of Citrobacter freundii.